The sequence spans 419 residues: uncharacterized protein (419 aa).

7 helical membrane-spanning segments follow: residues 16–36 (IMAKSFIISTVITVLLVLVVT), 186–206 (LVYIMLFVIYFSVIMYASMIA), 235–255 (LLGIGLVGITQLAIIIGAGSL), 283–303 (VIYAVIFFLLGYFLYATLAAF), 318–338 (ITPMTLLVVAGFMIAMFGLNA), 340–360 (DAGFITVTSFIPFFTPMIMFL), and 369–389 (FWQAAVGIGITLLTIVILAVI).

The protein to M.jannaschii MJ1024.

It is found in the cell membrane. This is an uncharacterized protein from Bacillus subtilis (strain 168).